The chain runs to 296 residues: Bifunctional protein FolD (296 aa).

Residues 166–168 (GRS), serine 191, and isoleucine 232 contribute to the NADP(+) site.

Belongs to the tetrahydrofolate dehydrogenase/cyclohydrolase family. In terms of assembly, homodimer.

The enzyme catalyses (6R)-5,10-methylene-5,6,7,8-tetrahydrofolate + NADP(+) = (6R)-5,10-methenyltetrahydrofolate + NADPH. The catalysed reaction is (6R)-5,10-methenyltetrahydrofolate + H2O = (6R)-10-formyltetrahydrofolate + H(+). It functions in the pathway one-carbon metabolism; tetrahydrofolate interconversion. Functionally, catalyzes the oxidation of 5,10-methylenetetrahydrofolate to 5,10-methenyltetrahydrofolate and then the hydrolysis of 5,10-methenyltetrahydrofolate to 10-formyltetrahydrofolate. This Cereibacter sphaeroides (strain ATCC 17029 / ATH 2.4.9) (Rhodobacter sphaeroides) protein is Bifunctional protein FolD.